The primary structure comprises 353 residues: Photosystem II protein D1 (353 aa).

Thr-2 carries the post-translational modification N-acetylthreonine. Phosphothreonine is present on Thr-2. 3 helical membrane-spanning segments follow: residues 29–46 (YIGWFGVIMIPTLLTATS), 118–133 (HFFLGICCYMGREWEL), and 142–156 (WIAVAYSAPVAAATA). Chlorophyll a is bound at residue His-118. A pheophytin a-binding site is contributed by Tyr-126. [CaMn4O5] cluster-binding residues include Asp-170 and Glu-189. Residues 197-218 (FHMLGVAGVFGGSLFSAMHGSL) form a helical membrane-spanning segment. His-198 lines the chlorophyll a pocket. Residues His-215 and 264–265 (SF) each bind a quinone. Residue His-215 coordinates Fe cation. His-272 provides a ligand contact to Fe cation. The chain crosses the membrane as a helical span at residues 274-288 (FLAAWPVVGIWFTAL). Residues His-332, Glu-333, Asp-342, and Ala-344 each coordinate [CaMn4O5] cluster. A propeptide spanning residues 345–353 (SVEAPSVNA) is cleaved from the precursor.

Belongs to the reaction center PufL/M/PsbA/D family. As to quaternary structure, PSII is composed of 1 copy each of membrane proteins PsbA, PsbB, PsbC, PsbD, PsbE, PsbF, PsbH, PsbI, PsbJ, PsbK, PsbL, PsbM, PsbT, PsbX, PsbY, PsbZ, Psb30/Ycf12, at least 3 peripheral proteins of the oxygen-evolving complex and a large number of cofactors. It forms dimeric complexes. The D1/D2 heterodimer binds P680, chlorophylls that are the primary electron donor of PSII, and subsequent electron acceptors. It shares a non-heme iron and each subunit binds pheophytin, quinone, additional chlorophylls, carotenoids and lipids. D1 provides most of the ligands for the Mn4-Ca-O5 cluster of the oxygen-evolving complex (OEC). There is also a Cl(-1) ion associated with D1 and D2, which is required for oxygen evolution. The PSII complex binds additional chlorophylls, carotenoids and specific lipids. serves as cofactor. In terms of processing, the 9 C-terminal residues are removed, probably by CTPA (AC O04073); processing is essential to allow assembly of the oxygen-evolving complex and thus photosynthetic growth. Post-translationally, tyr-161 forms a radical intermediate that is referred to as redox-active TyrZ, YZ or Y-Z.

Its subcellular location is the plastid. It is found in the chloroplast thylakoid membrane. It carries out the reaction 2 a plastoquinone + 4 hnu + 2 H2O = 2 a plastoquinol + O2. Functionally, photosystem II (PSII) is a light-driven water:plastoquinone oxidoreductase that uses light energy to abstract electrons from H(2)O, generating O(2) and a proton gradient subsequently used for ATP formation. It consists of a core antenna complex that captures photons, and an electron transfer chain that converts photonic excitation into a charge separation. The D1/D2 (PsbA/PsbD) reaction center heterodimer binds P680, the primary electron donor of PSII as well as several subsequent electron acceptors. This chain is Photosystem II protein D1, found in Tetradesmus obliquus (Green alga).